The sequence spans 136 residues: MLKRKLKPKRLQLPPQDVVFEGEAAMNEYTFYRNWVESWLQHIRSYYLLFIDGDPSLSKFFEIEICAHSWKRSTFDQQVFKFGLLWECVDIARSRTVYWQCALGTGHIQEDKVSEATSPFTDDSCTNSCLSRMTGQ.

Its subcellular location is the mitochondrion. This is an uncharacterized protein from Arabidopsis thaliana (Mouse-ear cress).